The chain runs to 154 residues: Aspartate carbamoyltransferase regulatory chain (154 aa).

Zn(2+)-binding residues include Cys109, Cys114, Cys138, and Cys141.

The protein belongs to the PyrI family. In terms of assembly, contains catalytic and regulatory chains. Zn(2+) is required as a cofactor.

In terms of biological role, involved in allosteric regulation of aspartate carbamoyltransferase. This is Aspartate carbamoyltransferase regulatory chain from Aliivibrio fischeri (strain ATCC 700601 / ES114) (Vibrio fischeri).